Consider the following 596-residue polypeptide: Elongation factor 4 (596 aa).

The tr-type G domain occupies 2 to 183 (KNIRNFSIIA…AIVDRIPAPV (182 aa)). Residues 14–19 (DHGKST) and 130–133 (NKID) each bind GTP.

Belongs to the TRAFAC class translation factor GTPase superfamily. Classic translation factor GTPase family. LepA subfamily.

The protein resides in the cell inner membrane. The catalysed reaction is GTP + H2O = GDP + phosphate + H(+). Functionally, required for accurate and efficient protein synthesis under certain stress conditions. May act as a fidelity factor of the translation reaction, by catalyzing a one-codon backward translocation of tRNAs on improperly translocated ribosomes. Back-translocation proceeds from a post-translocation (POST) complex to a pre-translocation (PRE) complex, thus giving elongation factor G a second chance to translocate the tRNAs correctly. Binds to ribosomes in a GTP-dependent manner. The protein is Elongation factor 4 of Sulfurimonas denitrificans (strain ATCC 33889 / DSM 1251) (Thiomicrospira denitrificans (strain ATCC 33889 / DSM 1251)).